The sequence spans 249 residues: Diaminopimelate epimerase (249 aa).

The substrate site is built by N11 and N60. C69 (proton donor) is an active-site residue. Residues 70 to 71 (GN), N164, and 182 to 183 (ER) contribute to the substrate site. C192 functions as the Proton acceptor in the catalytic mechanism. Position 193–194 (193–194 (GT)) interacts with substrate.

This sequence belongs to the diaminopimelate epimerase family. As to quaternary structure, homodimer.

Its subcellular location is the cytoplasm. The enzyme catalyses (2S,6S)-2,6-diaminopimelate = meso-2,6-diaminopimelate. Its pathway is amino-acid biosynthesis; L-lysine biosynthesis via DAP pathway; DL-2,6-diaminopimelate from LL-2,6-diaminopimelate: step 1/1. In terms of biological role, catalyzes the stereoinversion of LL-2,6-diaminopimelate (L,L-DAP) to meso-diaminopimelate (meso-DAP), a precursor of L-lysine and an essential component of the bacterial peptidoglycan. This Campylobacter jejuni subsp. jejuni serotype O:6 (strain 81116 / NCTC 11828) protein is Diaminopimelate epimerase.